The following is a 789-amino-acid chain: Trimethylamine-oxide aldolase (789 aa).

It in the C-terminal section; belongs to the GcvT family.

The catalysed reaction is trimethylamine N-oxide + H(+) = dimethylamine + formaldehyde. Catalyzes the conversion of trimethylamine N-oxide (TMAO) to dimethylamine (DMA) and formaldehyde. This Ruegeria pomeroyi (strain ATCC 700808 / DSM 15171 / DSS-3) (Silicibacter pomeroyi) protein is Trimethylamine-oxide aldolase.